An 810-amino-acid polypeptide reads, in one-letter code: Soluble starch synthase 2-3, chloroplastic/amyloplastic (810 aa).

Residues 1 to 16 constitute a chloroplast transit peptide; sequence MSSAVVASSTTFLVAL. Disordered stretches follow at residues 43–265 and 281–313; these read GRAG…PIPA and EPDAAEDGDDDDDWADSDASDSEIDQDDDSGPL. Residues 63–83 show a composition bias toward basic and acidic residues; sequence RDAGVVRRADDGENEAAVERA. Positions 84-93 are enriched in acidic residues; sequence GEDDEEEEEF. Over residues 102–116 the composition is skewed to basic residues; that stretch reads RSRRGGVGKVLKRRG. Positions 129–148 are enriched in low complexity; sequence DAARVRGAAAPAPAPTQDAA. The segment covering 281–310 has biased composition (acidic residues); it reads EPDAAEDGDDDDDWADSDASDSEIDQDDDS. Lysine 333 serves as a coordination point for ADP-alpha-D-glucose.

This sequence belongs to the glycosyltransferase 1 family. Bacterial/plant glycogen synthase subfamily. Expressed most exclusively in endosperm.

Its subcellular location is the plastid. The protein localises to the amyloplast. It is found in the chloroplast. It catalyses the reaction [(1-&gt;4)-alpha-D-glucosyl](n) + ADP-alpha-D-glucose = [(1-&gt;4)-alpha-D-glucosyl](n+1) + ADP + H(+). Its pathway is glycan biosynthesis; starch biosynthesis. Plays an important role during endosperm starch synthesis. Determines the type of amylopectin structure of starch grain. Synthesizes long B1 amylopectin chains by elongating short A and B1 chains, independently of the other soluble starch synthases. Barely active in japonica subspecies. The chain is Soluble starch synthase 2-3, chloroplastic/amyloplastic (SSII-3) from Oryza sativa subsp. indica (Rice).